Consider the following 139-residue polypeptide: MRIMGLDVGSKTVGVAISDPLGFTAQGLEIIKIDEEKAEFGFTRLEELVKQYQVEQFVIGLPKNMNNTNSPRVDASITYGNHIEHLFGLPVHYQDERLTTVEAERMLIEQADISRGKRKKVIDKLAAQLILQNYLNRNF.

Belongs to the YqgF nuclease family.

It localises to the cytoplasm. In terms of biological role, could be a nuclease involved in processing of the 5'-end of pre-16S rRNA. This is Putative pre-16S rRNA nuclease from Streptococcus pyogenes serotype M2 (strain MGAS10270).